We begin with the raw amino-acid sequence, 214 residues long: Osteoclast-stimulating factor 1 (214 aa).

The 60-residue stretch at 12–71 folds into the SH3 domain; it reads GQVKVYRALFTFDPRTPDELYFEEGDILYISDTSDSNWWKGTCRGRTGLIPSNYVAEQAE. ANK repeat units follow at residues 72–101, 105–135, and 139–168; these read SIDNPMHEAAKRGNLSWLRECLDNKVGING, AGNTSLYWACHGGHKDVVEILLSQPNCELNQ, and LGDTPLHAAAWKGYSDIVEMLLNKNARTDV.

It is found in the cytoplasm. Its function is as follows. Induces bone resorption, acting probably through a signaling cascade which results in the secretion of factor(s) enhancing osteoclast formation and activity. This Danio rerio (Zebrafish) protein is Osteoclast-stimulating factor 1 (ostf1).